A 206-amino-acid polypeptide reads, in one-letter code: Large ribosomal subunit protein uL4 (206 aa).

Residues 46–77 (GTRAQKDREQVKHSTKKPFKQKGTGRARAGMT) are disordered. Positions 58–70 (HSTKKPFKQKGTG) are enriched in basic residues.

It belongs to the universal ribosomal protein uL4 family. Part of the 50S ribosomal subunit.

One of the primary rRNA binding proteins, this protein initially binds near the 5'-end of the 23S rRNA. It is important during the early stages of 50S assembly. It makes multiple contacts with different domains of the 23S rRNA in the assembled 50S subunit and ribosome. Functionally, forms part of the polypeptide exit tunnel. The sequence is that of Large ribosomal subunit protein uL4 from Albidiferax ferrireducens (strain ATCC BAA-621 / DSM 15236 / T118) (Rhodoferax ferrireducens).